The sequence spans 469 residues: Cysteine--tRNA ligase (469 aa).

Cysteine 28 is a Zn(2+) binding site. The 'HIGH' region motif lies at 30-40; that stretch reads CTVYDLCHIGH. 3 residues coordinate Zn(2+): cysteine 216, histidine 241, and glutamate 245. The 'KMSKS' region motif lies at 273 to 277; it reads KMSKS. Lysine 276 contributes to the ATP binding site.

This sequence belongs to the class-I aminoacyl-tRNA synthetase family. In terms of assembly, monomer. Zn(2+) is required as a cofactor.

The protein resides in the cytoplasm. It carries out the reaction tRNA(Cys) + L-cysteine + ATP = L-cysteinyl-tRNA(Cys) + AMP + diphosphate. The sequence is that of Cysteine--tRNA ligase from Colwellia psychrerythraea (strain 34H / ATCC BAA-681) (Vibrio psychroerythus).